The sequence spans 255 residues: Pyrroloquinoline-quinone synthase (255 aa).

It belongs to the PqqC family.

The enzyme catalyses 6-(2-amino-2-carboxyethyl)-7,8-dioxo-1,2,3,4,7,8-hexahydroquinoline-2,4-dicarboxylate + 3 O2 = pyrroloquinoline quinone + 2 H2O2 + 2 H2O + H(+). It participates in cofactor biosynthesis; pyrroloquinoline quinone biosynthesis. Its function is as follows. Ring cyclization and eight-electron oxidation of 3a-(2-amino-2-carboxyethyl)-4,5-dioxo-4,5,6,7,8,9-hexahydroquinoline-7,9-dicarboxylic-acid to PQQ. In Cereibacter sphaeroides (strain ATCC 17025 / ATH 2.4.3) (Rhodobacter sphaeroides), this protein is Pyrroloquinoline-quinone synthase.